The primary structure comprises 217 residues: Probable ribonuclease P protein subunit 1 (217 aa).

This sequence belongs to the eukaryotic/archaeal RNase P protein component 1 family.

The protein localises to the nucleus. It localises to the nucleolus. The enzyme catalyses Endonucleolytic cleavage of RNA, removing 5'-extranucleotides from tRNA precursor.. Its function is as follows. Part of ribonuclease P, a protein complex that generates mature tRNA molecules by cleaving their 5'-ends. The sequence is that of Probable ribonuclease P protein subunit 1 from Schizosaccharomyces pombe (strain 972 / ATCC 24843) (Fission yeast).